A 573-amino-acid polypeptide reads, in one-letter code: Urease subunit alpha (573 aa).

Ni(2+)-binding residues include H139, H141, and K222. Residue K222 is modified to N6-carboxylysine. H224 contributes to the substrate binding site. Residues H251 and H277 each coordinate Ni(2+). The Proton donor role is filled by H325. D365 serves as a coordination point for Ni(2+).

It belongs to the metallo-dependent hydrolases superfamily. Urease alpha subunit family. In terms of assembly, heterotrimer of UreA (gamma), UreB (beta) and UreC (alpha) subunits. Three heterotrimers associate to form the active enzyme. Ni cation is required as a cofactor. In terms of processing, carboxylation allows a single lysine to coordinate two nickel ions.

The protein localises to the cytoplasm. It carries out the reaction urea + 2 H2O + H(+) = hydrogencarbonate + 2 NH4(+). The protein operates within nitrogen metabolism; urea degradation; CO(2) and NH(3) from urea (urease route): step 1/1. The protein is Urease subunit alpha of Flavobacterium johnsoniae (strain ATCC 17061 / DSM 2064 / JCM 8514 / BCRC 14874 / CCUG 350202 / NBRC 14942 / NCIMB 11054 / UW101) (Cytophaga johnsonae).